The primary structure comprises 636 residues: DNA-directed RNA polymerase subunit gamma (636 aa).

Cys-71, Cys-73, Cys-86, and Cys-89 together coordinate Zn(2+). Residues Asp-467, Asp-469, and Asp-471 each coordinate Mg(2+).

This sequence belongs to the RNA polymerase beta' chain family. RpoC1 subfamily. In cyanobacteria the RNAP catalytic core is composed of 2 alpha, 1 beta, 1 beta', 1 gamma and 1 omega subunit. When a sigma factor is associated with the core the holoenzyme is formed, which can initiate transcription. Mg(2+) is required as a cofactor. It depends on Zn(2+) as a cofactor.

It catalyses the reaction RNA(n) + a ribonucleoside 5'-triphosphate = RNA(n+1) + diphosphate. DNA-dependent RNA polymerase catalyzes the transcription of DNA into RNA using the four ribonucleoside triphosphates as substrates. This is DNA-directed RNA polymerase subunit gamma from Picosynechococcus sp. (strain ATCC 27264 / PCC 7002 / PR-6) (Agmenellum quadruplicatum).